Here is a 314-residue protein sequence, read N- to C-terminus: Olfactory receptor 5B12 (314 aa).

At 1–23 (MENNTEVTEFILVGLTDDPELQI) the chain is on the extracellular side. N-linked (GlcNAc...) asparagine glycosylation is present at Asn3. A helical membrane pass occupies residues 24-44 (PLFIVFLFIYLITLVGNLGMI). At 45–52 (ELILLDSC) the chain is on the cytoplasmic side. A helical transmembrane segment spans residues 53 to 73 (LHTPMYFFLSNLSLVDFGYSS). The Extracellular segment spans residues 74–97 (AVTPKVMVGFLTGDKFILYNACAT). A disulfide bond links Cys95 and Cys187. A helical membrane pass occupies residues 98-118 (QFFFFVAFITAESFLLASMAY). The Cytoplasmic segment spans residues 119–137 (DRYAALCKPLHYTTTMTTN). The chain crosses the membrane as a helical span at residues 138–158 (VCACLAIGSYICGFLNASIHT). Residues 159-194 (GNTFRLSFCRSNVVEHFFCDAPPLLTLSCSDNYISE) lie on the Extracellular side of the membrane. Residues 195–215 (MVIFFVVGFNDLFSILVILIS) form a helical membrane-spanning segment. Topologically, residues 216-235 (YLFIFITIMKMRSPEGRQKA) are cytoplasmic. Residues 236–256 (FSTCASHLTAVSIFYGTGIFM) traverse the membrane as a helical segment. At 257-269 (YLRPNSSHFMGTD) the chain is on the extracellular side. A glycan (N-linked (GlcNAc...) asparagine) is linked at Asn261. A helical transmembrane segment spans residues 270-290 (KMASVFYAIVIPMLNPLVYSL). Topologically, residues 291 to 314 (RNKEVKSAFKKTVGKAKASIGFIF) are cytoplasmic.

Belongs to the G-protein coupled receptor 1 family.

The protein resides in the cell membrane. In terms of biological role, odorant receptor. The protein is Olfactory receptor 5B12 (OR5B12) of Homo sapiens (Human).